A 381-amino-acid chain; its full sequence is Homoserine O-succinyltransferase (381 aa).

The region spanning 45–360 (NAVLVCHALN…PHGHDAFLLD (316 aa)) is the AB hydrolase-1 domain. Catalysis depends on Ser-151, which acts as the Nucleophile. Arg-221 contacts substrate. Catalysis depends on residues Asp-321 and His-354. Asp-355 lines the substrate pocket.

It belongs to the AB hydrolase superfamily. MetX family. Homodimer.

Its subcellular location is the cytoplasm. The catalysed reaction is L-homoserine + succinyl-CoA = O-succinyl-L-homoserine + CoA. It functions in the pathway amino-acid biosynthesis; L-methionine biosynthesis via de novo pathway; O-succinyl-L-homoserine from L-homoserine: step 1/1. In terms of biological role, transfers a succinyl group from succinyl-CoA to L-homoserine, forming succinyl-L-homoserine. The protein is Homoserine O-succinyltransferase of Burkholderia vietnamiensis (strain G4 / LMG 22486) (Burkholderia cepacia (strain R1808)).